The chain runs to 206 residues: GTP-binding protein Rho3 (206 aa).

24 to 31 is a GTP binding site; that stretch reads GDGACGKT. The Effector region signature appears at 46–54; the sequence is YEPTVFENY. Residues 71-75 and 129-132 each bind GTP; these read DTAGQ and SKCD. At cysteine 203 the chain carries Cysteine methyl ester. Residue cysteine 203 is the site of S-geranylgeranyl cysteine attachment. Residues 204 to 206 constitute a propeptide, removed in mature form; the sequence is CVM.

The protein belongs to the small GTPase superfamily. Rho family.

The protein resides in the cell membrane. This is GTP-binding protein Rho3 (RHO3) from Schizophyllum commune (Split gill fungus).